Here is a 360-residue protein sequence, read N- to C-terminus: Putative F-box protein At3g16210 (360 aa).

One can recognise an F-box domain in the interval 1–48 (MSKFLPEELAIEILVRLSMKDLARFRCVCKTWRDLINDPGFTETYRDM).

This Arabidopsis thaliana (Mouse-ear cress) protein is Putative F-box protein At3g16210.